Here is a 351-residue protein sequence, read N- to C-terminus: UDP-3-O-acylglucosamine N-acyltransferase (351 aa).

The Proton acceptor role is filled by H257.

This sequence belongs to the transferase hexapeptide repeat family. LpxD subfamily. Homotrimer.

It catalyses the reaction a UDP-3-O-[(3R)-3-hydroxyacyl]-alpha-D-glucosamine + a (3R)-hydroxyacyl-[ACP] = a UDP-2-N,3-O-bis[(3R)-3-hydroxyacyl]-alpha-D-glucosamine + holo-[ACP] + H(+). Its pathway is bacterial outer membrane biogenesis; LPS lipid A biosynthesis. In terms of biological role, catalyzes the N-acylation of UDP-3-O-acylglucosamine using 3-hydroxyacyl-ACP as the acyl donor. Is involved in the biosynthesis of lipid A, a phosphorylated glycolipid that anchors the lipopolysaccharide to the outer membrane of the cell. In Methylorubrum extorquens (strain CM4 / NCIMB 13688) (Methylobacterium extorquens), this protein is UDP-3-O-acylglucosamine N-acyltransferase.